The chain runs to 81 residues: Protein Vpu (81 aa).

The Extracellular portion of the chain corresponds to 1 to 7 (MQPLQIL). Residues 8-28 (AIVALVVAAIIAIVVWTIVYI) traverse the membrane as a helical segment. At 29–81 (EYRKILRQRKIDRLIDRITERAEDSGNESEGDQEELSALVERGHLAPWDVDDL) the chain is on the cytoplasmic side. Positions 50–81 (AEDSGNESEGDQEELSALVERGHLAPWDVDDL) are disordered. Phosphoserine; by host CK2 is present on residues S53 and S57. The segment covering 53 to 63 (SGNESEGDQEE) has biased composition (acidic residues).

This sequence belongs to the HIV-1 VPU protein family. As to quaternary structure, homopentamer. Interacts with host CD4 and BRTC; these interactions induce proteasomal degradation of CD4. Interacts with host BST2; this interaction leads to the degradation of host BST2. Interacts with host FBXW11. Interacts with host AP1M1; this interaction plays a role in the mistrafficking and subsequent degradation of host BST2. Interacts with host RANBP2; this interaction allows Vpu to down-regulate host BLM sumoylation. In terms of processing, phosphorylated by host CK2. This phosphorylation is necessary for interaction with human BTRC and degradation of CD4.

It is found in the host membrane. Its activity is regulated as follows. Ion channel activity is inhibited by hexamethylene amiloride in vitro. In terms of biological role, enhances virion budding by targeting host CD4 and Tetherin/BST2 to proteasome degradation. Degradation of CD4 prevents any unwanted premature interactions between viral Env and its host receptor CD4 in the endoplasmic reticulum. Degradation of antiretroviral protein Tetherin/BST2 is important for virion budding, as BST2 tethers new viral particles to the host cell membrane. Mechanistically, Vpu bridges either CD4 or BST2 to BTRC, a substrate recognition subunit of the Skp1/Cullin/F-box protein E3 ubiquitin ligase, induces their ubiquitination and subsequent proteasomal degradation. The alteration of the E3 ligase specificity by Vpu seems to promote the degradation of host IKBKB, leading to NF-kappa-B down-regulation and subsequent apoptosis. Acts as a viroporin that forms an oligomeric ion channel in membranes. Modulates the host DNA repair mechanisms to promote degradation of nuclear viral cDNA in cells that are already productively infected in order to suppress immune sensing and proviral hyper-integration (superinfection). Manipulates PML-NBs and modulates SUMOylation of host BLM protein thereby enhancing its DNA-end processing activity toward viral unintegrated linear DNA. Also inhibits RAD52-mediated homologous repair of viral cDNA, preventing the generation of dead-end circular forms of single copies of the long terminal repeat and permitting sustained nucleolytic attack. The protein is Protein Vpu of Human immunodeficiency virus type 1 group M subtype B (isolate SF162) (HIV-1).